Consider the following 912-residue polypeptide: Brevican core protein (912 aa).

The signal sequence occupies residues 1 to 22 (MAPLFLPLLATLVLAWIPVALA). Residues 36-155 (RVRIAGDAPL…SSDAVEVKVK (120 aa)) form the Ig-like V-type domain. Cystine bridges form between Cys-57–Cys-137, Cys-179–Cys-250, Cys-203–Cys-224, Cys-277–Cys-352, and Cys-301–Cys-322. Asn-130 carries an N-linked (GlcNAc...) asparagine glycan. Link domains lie at 157 to 252 (VVFL…YCYA) and 257 to 354 (GELF…YCFR). An N-linked (GlcNAc...) asparagine glycan is attached at Asn-337. 2 disordered regions span residues 408-427 (IPII…PAEA) and 438-651 (SIVP…SGDC). Ser-418 carries the post-translational modification Phosphoserine. The O-linked (Xyl...) (chondroitin sulfate) serine glycan is linked to Ser-418. Basic and acidic residues predominate over residues 448-463 (EEGKVLEQEEKYRGEE). Residues 464-478 (EKEEEEEEEEVEDEA) are compositionally biased toward acidic residues. A compositionally biased stretch (pro residues) spans 520-537 (VSPPPYDEPEAPRPPRVL). The span at 603 to 617 (GDTRDLETPSEENSR) shows a compositional bias: basic and acidic residues. The EGF-like domain occupies 647 to 683 (SSGDCVPSPCHNGGTCLEEEEGVRCLCLPGYGGDLCD). 8 disulfide bridges follow: Cys-651-Cys-662, Cys-656-Cys-671, Cys-673-Cys-682, Cys-689-Cys-700, Cys-717-Cys-809, Cys-785-Cys-801, Cys-816-Cys-859, and Cys-845-Cys-872. The 129-residue stretch at 683-811 (DVGLHFCSPG…NYHLSYTCKM (129 aa)) folds into the C-type lectin domain. Residues 814–874 (VSCGPPPELP…WGLPQISCVP (61 aa)) enclose the Sushi domain.

Belongs to the aggrecan/versican proteoglycan family. Interacts with TNR. In terms of processing, O-glycosylated; contains chondroitin sulfate. In terms of tissue distribution, brain; expressed in cerebellar astrocytes but not in neurons.

It is found in the secreted. Its subcellular location is the extracellular space. The protein resides in the extracellular matrix. In terms of biological role, may play a role in the terminally differentiating and the adult nervous system during postnatal development. Could stabilize interactions between hyaluronan (HA) and brain proteoglycans. This is Brevican core protein (BCAN) from Bos taurus (Bovine).